We begin with the raw amino-acid sequence, 237 residues long: 2-C-methyl-D-erythritol 4-phosphate cytidylyltransferase (237 aa).

This sequence belongs to the IspD/TarI cytidylyltransferase family. IspD subfamily.

The enzyme catalyses 2-C-methyl-D-erythritol 4-phosphate + CTP + H(+) = 4-CDP-2-C-methyl-D-erythritol + diphosphate. Its pathway is isoprenoid biosynthesis; isopentenyl diphosphate biosynthesis via DXP pathway; isopentenyl diphosphate from 1-deoxy-D-xylulose 5-phosphate: step 2/6. Catalyzes the formation of 4-diphosphocytidyl-2-C-methyl-D-erythritol from CTP and 2-C-methyl-D-erythritol 4-phosphate (MEP). The protein is 2-C-methyl-D-erythritol 4-phosphate cytidylyltransferase of Clostridioides difficile (strain 630) (Peptoclostridium difficile).